The primary structure comprises 438 residues: Protein ROOT INITIATION DEFECTIVE 3 (438 aa).

6 WD repeats span residues 36–74 (AHGL…AEVK), 76–115 (YPVE…LLKK), 118–157 (GHYR…DDFQ), 171–212 (EHTM…LLKN), 214–253 (IFPS…EYGT), and 261–300 (EKGK…HVRT). Residues 394-434 (AATEMEMERLKLEYKRSLQMNEQWQKNYENLLQVVMEEEQI) adopt a coiled-coil conformation.

Functionally, involved in meristem development. Acts as a negative regulator of the CUC-STM pathway in shoot apical meristem (SAM) neo-formation. In Arabidopsis thaliana (Mouse-ear cress), this protein is Protein ROOT INITIATION DEFECTIVE 3 (RID3).